A 621-amino-acid chain; its full sequence is Chaperone protein HscA homolog (621 aa).

This sequence belongs to the heat shock protein 70 family.

In terms of biological role, chaperone involved in the maturation of iron-sulfur cluster-containing proteins. Has a low intrinsic ATPase activity which is markedly stimulated by HscB. This Cupriavidus taiwanensis (strain DSM 17343 / BCRC 17206 / CCUG 44338 / CIP 107171 / LMG 19424 / R1) (Ralstonia taiwanensis (strain LMG 19424)) protein is Chaperone protein HscA homolog.